The chain runs to 464 residues: Argininosuccinate lyase (464 aa).

It belongs to the lyase 1 family. Argininosuccinate lyase subfamily.

It localises to the cytoplasm. It catalyses the reaction 2-(N(omega)-L-arginino)succinate = fumarate + L-arginine. Its pathway is amino-acid biosynthesis; L-arginine biosynthesis; L-arginine from L-ornithine and carbamoyl phosphate: step 3/3. The protein is Argininosuccinate lyase of Desulfotalea psychrophila (strain LSv54 / DSM 12343).